A 657-amino-acid chain; its full sequence is tRNA 5-methylaminomethyl-2-thiouridine biosynthesis bifunctional protein MnmC (657 aa).

The tRNA (mnm(5)s(2)U34)-methyltransferase stretch occupies residues 1–233 (MPRALEPAEP…KWQMTVASFR (233 aa)). Residues 257–657 (IGAGLAGCAV…LRALRHGHTG (401 aa)) form an FAD-dependent cmnm(5)s(2)U34 oxidoreductase region.

In the N-terminal section; belongs to the methyltransferase superfamily. tRNA (mnm(5)s(2)U34)-methyltransferase family. This sequence in the C-terminal section; belongs to the DAO family. FAD is required as a cofactor.

It is found in the cytoplasm. It catalyses the reaction 5-aminomethyl-2-thiouridine(34) in tRNA + S-adenosyl-L-methionine = 5-methylaminomethyl-2-thiouridine(34) in tRNA + S-adenosyl-L-homocysteine + H(+). Catalyzes the last two steps in the biosynthesis of 5-methylaminomethyl-2-thiouridine (mnm(5)s(2)U) at the wobble position (U34) in tRNA. Catalyzes the FAD-dependent demodification of cmnm(5)s(2)U34 to nm(5)s(2)U34, followed by the transfer of a methyl group from S-adenosyl-L-methionine to nm(5)s(2)U34, to form mnm(5)s(2)U34. In Cupriavidus necator (strain ATCC 17699 / DSM 428 / KCTC 22496 / NCIMB 10442 / H16 / Stanier 337) (Ralstonia eutropha), this protein is tRNA 5-methylaminomethyl-2-thiouridine biosynthesis bifunctional protein MnmC.